A 134-amino-acid chain; its full sequence is Large ribosomal subunit protein uL16c (134 aa).

It belongs to the universal ribosomal protein uL16 family. As to quaternary structure, part of the 50S ribosomal subunit.

The protein resides in the plastid. Its subcellular location is the chloroplast. The polypeptide is Large ribosomal subunit protein uL16c (Oltmannsiellopsis viridis (Marine flagellate)).